The chain runs to 238 residues: Zinc import ATP-binding protein ZnuC (238 aa).

One can recognise an ABC transporter domain in the interval 5–220; sequence VKLKNVCVNL…LEFISIFGLK (216 aa). An ATP-binding site is contributed by 37–44; that stretch reads GPNGAGKS.

Belongs to the ABC transporter superfamily. Zinc importer (TC 3.A.1.15.5) family. The complex is composed of two ATP-binding proteins (ZnuC), two transmembrane proteins (ZnuB) and a solute-binding protein (ZnuA).

The protein localises to the cell inner membrane. The catalysed reaction is Zn(2+)(out) + ATP(in) + H2O(in) = Zn(2+)(in) + ADP(in) + phosphate(in) + H(+)(in). Its function is as follows. Part of the ABC transporter complex ZnuABC involved in zinc import. Responsible for energy coupling to the transport system. The protein is Zinc import ATP-binding protein ZnuC of Buchnera aphidicola subsp. Acyrthosiphon pisum (strain APS) (Acyrthosiphon pisum symbiotic bacterium).